The sequence spans 504 residues: MGFSVFSPTRSLDGVSGFFQGAFLLSLFLVLFKAVQFYLRRQWLLKALEKFPSTPSHWLWGHNLKDREFQQVLTWVEKFPGACLQWLSGSTARVLLYDPDYVKVVLGRSDPKPYQSLAPWIGYGLLLLNGKKWFQHRRMLTPAFHYDILKPYVKIMADSVSIMLDKWEKLDDQDHPLEIFHYVSLMTLDTVMKCAFSHQGSVQLDVNSRSYTKAVEDLNNLIFFRVRSAFYGNSIIYNMSSDGRLSRRACQIAHEHTDGVIKTRKAQLQNEEELQKARKKRHLDFLDILLFAKMEDGKSLSDEDLRAEVDTFMFEGHDTTASGISWVFYALATHPEHQERCREEVQSILGDGTSVTWDHLDQMPYTTMCIKEALRLYSPVPSVSRELSSPVTFPDGRSIPKGIRVTILIYGLHHNPSYWPNPKVFDPSRFSPDSPRHSHAYLPFSGGARNCIGKQFAMNELKVAVALTLLRFELLPDPTRIPVPMPRLVLKSKNGIHLRLKKLR.

Positions 1–4 are excised as a propeptide; that stretch reads MGFS. Heme is bound at residue Glu-315. Residue Ser-434 is modified to Phosphoserine. Residue Cys-451 participates in heme binding.

It belongs to the cytochrome P450 family. It depends on heme as a cofactor.

It localises to the endoplasmic reticulum membrane. It is found in the microsome membrane. The catalysed reaction is an omega-methyl-long-chain fatty acid + reduced [NADPH--hemoprotein reductase] + O2 = an omega-hydroxy-long-chain fatty acid + oxidized [NADPH--hemoprotein reductase] + H2O + H(+). It catalyses the reaction dodecanoate + reduced [NADPH--hemoprotein reductase] + O2 = (11R)-hydroxydodecanoate + oxidized [NADPH--hemoprotein reductase] + H2O + H(+). The enzyme catalyses dodecanoate + reduced [NADPH--hemoprotein reductase] + O2 = 12-hydroxydodecanoate + oxidized [NADPH--hemoprotein reductase] + H2O + H(+). It carries out the reaction tetradecanoate + reduced [NADPH--hemoprotein reductase] + O2 = 14-hydroxytetradecanoate + oxidized [NADPH--hemoprotein reductase] + H2O + H(+). The catalysed reaction is hexadecanoate + reduced [NADPH--hemoprotein reductase] + O2 = 16-hydroxyhexadecanoate + oxidized [NADPH--hemoprotein reductase] + H2O + H(+). It participates in lipid metabolism; fatty acid metabolism. In terms of biological role, a cytochrome P450 monooxygenase that catalyzes omega and omega-1 hydroxylation of saturated fatty acids. Exhibits preferential omega versus omega-1 regioselectivity and (R) versus (S) stereoselectivity for hydroxylation of lauric and myristic acids. Has low activity toward palmitic acid. Mechanistically, uses molecular oxygen inserting one oxygen atom into a substrate, and reducing the second into a water molecule, with two electrons provided by NADPH via cytochrome P450 reductase (CPR; NADPH-ferrihemoprotein reductase). The polypeptide is Cytochrome P450 4A2 (Rattus norvegicus (Rat)).